A 284-amino-acid chain; its full sequence is Tryptophan synthase alpha chain (284 aa).

Catalysis depends on proton acceptor residues E55 and D66.

Belongs to the TrpA family. As to quaternary structure, tetramer of two alpha and two beta chains.

The enzyme catalyses (1S,2R)-1-C-(indol-3-yl)glycerol 3-phosphate + L-serine = D-glyceraldehyde 3-phosphate + L-tryptophan + H2O. It participates in amino-acid biosynthesis; L-tryptophan biosynthesis; L-tryptophan from chorismate: step 5/5. The alpha subunit is responsible for the aldol cleavage of indoleglycerol phosphate to indole and glyceraldehyde 3-phosphate. The polypeptide is Tryptophan synthase alpha chain (Methanococcus voltae).